Consider the following 445-residue polypeptide: MGDKEKKPLKYRILTYGCQMNVRDSETIAGLLEGSGFNQAEDLSEADLIVFNTCSVRHSAENKVYGKLGEIASLKKKRPELLIAFGGCMAQLPEVRQKLKKRGVDVVFGTHNIHELPYLIARAKEKRSPVFEVWEKEGSIVEPLPSCRKPGLSAFVNIMFGCNNFCSYCIVPYTRGRERSRKADDIIRELEELAAAGYKEVTLLGQNVNSYGRGLGEKIEFADLLYRANSVAGIERIRFTTSHPKDVSDRLLQAIAECEKLCEHIHAPLQAGSNRILQRMNRNYSREHYLKLVERMRHYVPGVSITSDLIVGFPGETEEDFLETLDMVERVRFDAAFTFLYSQRSGTRAAELAEQIPLEEKKQRLERLNRRQYQIATEINQELQGSIQEVLVEGPSKTNPQKLTSRTRSNRIVIFSGGKDLIGRLINVKITEAKTFSLFGEIFNE.

The 117-residue stretch at leucine 9–glutamate 125 folds into the MTTase N-terminal domain. [4Fe-4S] cluster contacts are provided by cysteine 18, cysteine 54, cysteine 88, cysteine 162, cysteine 166, and cysteine 169. Positions arginine 148–glutamate 378 constitute a Radical SAM core domain. Residues glutamine 381–asparagine 444 form the TRAM domain.

This sequence belongs to the methylthiotransferase family. MiaB subfamily. Monomer. It depends on [4Fe-4S] cluster as a cofactor.

It localises to the cytoplasm. The enzyme catalyses N(6)-dimethylallyladenosine(37) in tRNA + (sulfur carrier)-SH + AH2 + 2 S-adenosyl-L-methionine = 2-methylsulfanyl-N(6)-dimethylallyladenosine(37) in tRNA + (sulfur carrier)-H + 5'-deoxyadenosine + L-methionine + A + S-adenosyl-L-homocysteine + 2 H(+). Its function is as follows. Catalyzes the methylthiolation of N6-(dimethylallyl)adenosine (i(6)A), leading to the formation of 2-methylthio-N6-(dimethylallyl)adenosine (ms(2)i(6)A) at position 37 in tRNAs that read codons beginning with uridine. The polypeptide is tRNA-2-methylthio-N(6)-dimethylallyladenosine synthase (Syntrophomonas wolfei subsp. wolfei (strain DSM 2245B / Goettingen)).